The primary structure comprises 148 residues: Small ribosomal subunit protein uS15 (148 aa).

Residues 1-14 (MGRLHSHRHGKSHS) are compositionally biased toward basic residues. Positions 1–27 (MGRLHSHRHGKSHSIRPSSPKAPSWIQ) are disordered.

Belongs to the universal ribosomal protein uS15 family. In terms of assembly, part of the 30S ribosomal subunit.

In Cenarchaeum symbiosum (strain A), this protein is Small ribosomal subunit protein uS15.